A 362-amino-acid chain; its full sequence is Chorismate synthase (362 aa).

Arginine 46 provides a ligand contact to NADP(+). Residues 121–123 (RAS), 237–238 (NA), glycine 277, 292–296 (KPTPS), and arginine 318 each bind FMN.

Belongs to the chorismate synthase family. Homotetramer. FMNH2 serves as cofactor.

It catalyses the reaction 5-O-(1-carboxyvinyl)-3-phosphoshikimate = chorismate + phosphate. It participates in metabolic intermediate biosynthesis; chorismate biosynthesis; chorismate from D-erythrose 4-phosphate and phosphoenolpyruvate: step 7/7. Functionally, catalyzes the anti-1,4-elimination of the C-3 phosphate and the C-6 proR hydrogen from 5-enolpyruvylshikimate-3-phosphate (EPSP) to yield chorismate, which is the branch point compound that serves as the starting substrate for the three terminal pathways of aromatic amino acid biosynthesis. This reaction introduces a second double bond into the aromatic ring system. The protein is Chorismate synthase of Campylobacter lari (strain RM2100 / D67 / ATCC BAA-1060).